An 812-amino-acid chain; its full sequence is Probable inorganic carbon transporter subunit DabA (812 aa).

Residues Cys339, Asp341, His501, and Cys516 each contribute to the Zn(2+) site.

This sequence belongs to the inorganic carbon transporter (TC 9.A.2) DabA family. In terms of assembly, forms a complex with DabB. It depends on Zn(2+) as a cofactor.

The protein resides in the cell inner membrane. Part of an energy-coupled inorganic carbon pump. The sequence is that of Probable inorganic carbon transporter subunit DabA from Xanthomonas axonopodis pv. citri (strain 306).